Reading from the N-terminus, the 424-residue chain is Transcription regulator spe-44 (424 aa).

The SAND domain occupies 65-150; that stretch reads PLQITIPEGD…RTHMEAMTID (86 aa). Disordered regions lie at residues 178 to 228 and 371 to 394; these read ARKS…KPRQ and EHSVKYQPRTSSSSQESLHTAREF. The segment covering 192-210 has biased composition (basic and acidic residues); that stretch reads YEIENEMAGKEADNDDNRK. Positions 378 to 388 are enriched in polar residues; sequence PRTSSSSQESL.

The protein resides in the chromosome. It localises to the nucleus. Functionally, transcription factor which controls spermatogenesis and sperm cell fate by regulation of sperm gene expression. This Caenorhabditis elegans protein is Transcription regulator spe-44.